The following is an 83-amino-acid chain: U5-theraphotoxin-Hs1a 5 (83 aa).

Residues 1–21 (MKTSMFLTLTGLVLLFVVCYA) form the signal peptide. A propeptide spanning residues 22 to 49 (SESEEKEFPKELPSSIFAADSDFKVEER) is cleaved from the precursor. Disulfide bonds link Cys51-Cys63, Cys56-Cys68, and Cys62-Cys75.

The protein belongs to the neurotoxin 10 (Hwtx-1) family. 51 (Hntx-8) subfamily. Hntx-8 sub-subfamily. In terms of tissue distribution, expressed by the venom gland.

It localises to the secreted. Agglutinates erythrocytes. This Cyriopagopus schmidti (Chinese bird spider) protein is U5-theraphotoxin-Hs1a 5.